A 390-amino-acid chain; its full sequence is Alanine racemase (390 aa).

Catalysis depends on Lys46, which acts as the Proton acceptor; specific for D-alanine. An N6-(pyridoxal phosphate)lysine modification is found at Lys46. Arg144 lines the substrate pocket. Catalysis depends on Tyr275, which acts as the Proton acceptor; specific for L-alanine. A substrate-binding site is contributed by Met323.

It belongs to the alanine racemase family. The cofactor is pyridoxal 5'-phosphate.

It carries out the reaction L-alanine = D-alanine. Its pathway is amino-acid biosynthesis; D-alanine biosynthesis; D-alanine from L-alanine: step 1/1. Its function is as follows. Catalyzes the interconversion of L-alanine and D-alanine. May also act on other amino acids. This is Alanine racemase (alr) from Mycolicibacterium vanbaalenii (strain DSM 7251 / JCM 13017 / BCRC 16820 / KCTC 9966 / NRRL B-24157 / PYR-1) (Mycobacterium vanbaalenii).